The primary structure comprises 209 residues: MEDLLDLGGERRRGSTTSGPRMGRRAQQESAQVENHLSGKNSSILTGEVAPPPKPPRRQGGWADDSMKTSKSGRRASEEVEEGSHRLRQQSFGGSDDGGDIPVIPDLEDVQEEDFALQVAAPPSIQVNRVMTYRDLDNDLMKYAAFQTLDGEIDLKLLTKVLAPEHEVREDDVNWDWDRLYTEVSSELLSEWDLLQSEKEDPMGQPAHT.

M1 is modified (N-acetylmethionine). The disordered stretch occupies residues 1-100; that stretch reads MEDLLDLGGE…SFGGSDDGGD (100 aa). A compositionally biased stretch (polar residues) spans 28–45; that stretch reads QESAQVENHLSGKNSSIL. The span at 75–85 shows a compositional bias: basic and acidic residues; sequence RASEEVEEGSH. S77 is modified (phosphoserine).

The protein belongs to the IFT43 family. In terms of assembly, component of the IFT complex A (IFT-A) complex. IFT-A complex is divided into a core subcomplex composed of IFT122:IFT140:WDR19 which is associated with TULP3 and a peripheral subcomplex composed of IFT43:WDR35:TTC21B. Interacts directy with IFT122, WDR35 and TTC21B.

Its subcellular location is the cytoplasm. The protein resides in the cytoskeleton. It is found in the cell projection. It localises to the cilium. Its function is as follows. As a component of IFT complex A (IFT-A), a complex required for retrograde ciliary transport and entry into cilia of G protein-coupled receptors (GPCRs), it is involved in ciliogenesis. Involved in retrograde ciliary transport along microtubules from the ciliary tip to the base. The protein is Intraflagellar transport protein 43 homolog (IFT43) of Canis lupus familiaris (Dog).